Here is a 297-residue protein sequence, read N- to C-terminus: Ribosomal RNA small subunit methyltransferase H (297 aa).

S-adenosyl-L-methionine contacts are provided by residues G30–Y32, D48, F75, D96, and Q103.

It belongs to the methyltransferase superfamily. RsmH family.

Its subcellular location is the cytoplasm. The enzyme catalyses cytidine(1402) in 16S rRNA + S-adenosyl-L-methionine = N(4)-methylcytidine(1402) in 16S rRNA + S-adenosyl-L-homocysteine + H(+). In terms of biological role, specifically methylates the N4 position of cytidine in position 1402 (C1402) of 16S rRNA. This Ehrlichia canis (strain Jake) protein is Ribosomal RNA small subunit methyltransferase H.